Reading from the N-terminus, the 390-residue chain is GTPase Obg/CgtA (390 aa).

One can recognise an Obg domain in the interval 1–159; it reads MKFVDEAVIK…RDIRLELLLL (159 aa). An OBG-type G domain is found at 160–333; it reads ADVGMLGMPN…LCMKLAEFMD (174 aa). Residues 166 to 173, 191 to 195, 213 to 216, 283 to 286, and 314 to 316 each bind GTP; these read GMPNAGKS, FTTLV, DIPG, NKVD, and SAA. Positions 173 and 193 each coordinate Mg(2+).

This sequence belongs to the TRAFAC class OBG-HflX-like GTPase superfamily. OBG GTPase family. Monomer. Interacts with SpoT (AC Q9KNM2) in a yeast 2-hybrid assay. Mg(2+) is required as a cofactor.

The protein resides in the cytoplasm. Depletion experiments lead to gene down regulation and a dramatic increase in ppGpp levels, like those seen in the stringent response. There is no change in cell morphology in depletion experiments, but cells are very sensitive to the DNA-damaging agent hydroxyurea and are very elongated. Overexpression reduces growth and leads to elongated cells. Overexpression of proteins with C-terminal deletions of 29 or 62 amino acids showed fewer elongated cells. Its function is as follows. An essential GTPase which binds GTP, GDP and possibly (p)ppGpp with moderate affinity, with high nucleotide exchange rates and a fairly low GTP hydrolysis rate. It may play a role in control of the cell cycle, stress response, ribosome biogenesis and in those bacteria that undergo differentiation, in morphogenesis control. GTPase activity is stimulated by 50S ribosomal subunits. This chain is GTPase Obg/CgtA, found in Vibrio cholerae serotype O1 (strain ATCC 39315 / El Tor Inaba N16961).